We begin with the raw amino-acid sequence, 230 residues long: Endonuclease NucS (230 aa).

The protein belongs to the NucS endonuclease family.

Its subcellular location is the cytoplasm. Cleaves both 3' and 5' ssDNA extremities of branched DNA structures. This is Endonuclease NucS from Corynebacterium efficiens (strain DSM 44549 / YS-314 / AJ 12310 / JCM 11189 / NBRC 100395).